Reading from the N-terminus, the 337-residue chain is Glyceraldehyde-3-phosphate dehydrogenase, cytosolic (337 aa).

NAD(+) is bound by residues 13 to 14 (RI), Asp-35, and Arg-82. D-glyceraldehyde 3-phosphate contacts are provided by residues 153-155 (SCT), Thr-184, 213-214 (TG), and Arg-236. Residue Cys-154 is the Nucleophile of the active site. Asn-318 lines the NAD(+) pocket.

This sequence belongs to the glyceraldehyde-3-phosphate dehydrogenase family. As to quaternary structure, homotetramer.

The protein localises to the cytoplasm. It catalyses the reaction D-glyceraldehyde 3-phosphate + phosphate + NAD(+) = (2R)-3-phospho-glyceroyl phosphate + NADH + H(+). Its pathway is carbohydrate degradation; glycolysis; pyruvate from D-glyceraldehyde 3-phosphate: step 1/5. Key enzyme in glycolysis that catalyzes the first step of the pathway by converting D-glyceraldehyde 3-phosphate (G3P) into 3-phospho-D-glyceroyl phosphate. Essential for the maintenance of cellular ATP levels and carbohydrate metabolism. The polypeptide is Glyceraldehyde-3-phosphate dehydrogenase, cytosolic (GAPC) (Craterostigma plantagineum (Blue gem)).